We begin with the raw amino-acid sequence, 91 residues long: RNA-binding protein Hfq (91 aa).

Residues 9 to 68 form the Sm domain; the sequence is DPFLNALRRERVPVSVYLVNGIKLQGTIESFDQFVVLLRNTVSQMVYKHAISTVVPARNV.

It belongs to the Hfq family. Homohexamer.

Functionally, RNA chaperone that binds small regulatory RNA (sRNAs) and mRNAs to facilitate mRNA translational regulation in response to envelope stress, environmental stress and changes in metabolite concentrations. Also binds with high specificity to tRNAs. This is RNA-binding protein Hfq from Stenotrophomonas maltophilia (strain K279a).